The following is a 317-amino-acid chain: DNA-directed RNA polymerase subunit alpha (317 aa).

Residues 1 to 234 are alpha N-terminal domain (alpha-NTD); that stretch reads MKQFVRPEFI…AHLEFFIDLN (234 aa). An alpha C-terminal domain (alpha-CTD) region spans residues 250 to 317; that stretch reads DKELDRTVEE…ASLGLAFRQS (68 aa).

This sequence belongs to the RNA polymerase alpha chain family. In terms of assembly, homodimer. The RNAP catalytic core consists of 2 alpha, 1 beta, 1 beta' and 1 omega subunit. When a sigma factor is associated with the core the holoenzyme is formed, which can initiate transcription.

The enzyme catalyses RNA(n) + a ribonucleoside 5'-triphosphate = RNA(n+1) + diphosphate. In terms of biological role, DNA-dependent RNA polymerase catalyzes the transcription of DNA into RNA using the four ribonucleoside triphosphates as substrates. This chain is DNA-directed RNA polymerase subunit alpha, found in Mycoplasma mycoides subsp. mycoides SC (strain CCUG 32753 / NCTC 10114 / PG1).